A 707-amino-acid chain; its full sequence is Trans-feruloyl-CoA synthase FCS1 (707 aa).

ATP is bound by residues His-267 and 524 to 535; that span reads ARAIGYPVVMKA. An ATP-grasp domain is found at 498 to 549; that stretch reads KELLRPLGIAFPPSQFAANAEAAAAAARAIGYPVVMKAQAAALGHKSDAGGV.

In the N-terminal section; belongs to the acetate CoA ligase alpha subunit family. It in the C-terminal section; belongs to the acetate CoA ligase beta subunit family. Homodimer.

The catalysed reaction is (E)-ferulate + ATP + CoA = (E)-feruloyl-CoA + ADP + phosphate. Its function is as follows. Catalyzes the formation of feruloyl-CoA, ADP and phosphate from ferulate, CoA and ATP. The protein is Trans-feruloyl-CoA synthase FCS1 of Unknown prokaryotic organism.